A 440-amino-acid chain; its full sequence is Stromal membrane-associated protein 1 (440 aa).

One can recognise an Arf-GAP domain in the interval 18 to 143 (QLILSKLLRE…IAITNKEKEK (126 aa)). Residues 33–56 (CADCEAKGPRWASWNIGVFICIRC) form a C4-type zinc finger. Basic and acidic residues-rich tracts occupy residues 140-158 (EKEK…EKPA) and 165-178 (KLPK…EPKK). Disordered regions lie at residues 140 to 211 (EKEK…PATA) and 410 to 440 (NASA…QLWK). Residues 192 to 196 (LLGLD) carry the Interaction with clathrin heavy chains motif. Residues 420–440 (STTAGWSGSSSGQTLSTQLWK) are compositionally biased toward low complexity.

Interacts with ARF6. Interacts with clathrin heavy chains via the clathrin box-like motif. Detected in adult brain, lung, heart, liver, ovary and bone marrow. Detected in stromal cells of the red pulp of adult spleen.

It is found in the cell membrane. In terms of biological role, GTPase activating protein that acts on ARF6. Plays a role in clathrin-dependent endocytosis. May play a role in erythropoiesis. The sequence is that of Stromal membrane-associated protein 1 (Smap1) from Mus musculus (Mouse).